The sequence spans 313 residues: Probable cell division protein WhiA (313 aa).

Residues 277 to 311 constitute a DNA-binding region (H-T-H motif); sequence SLKEVAAQVPDGPISKSGVNHRFQKIREIAKQLKE.

This sequence belongs to the WhiA family.

Involved in cell division and chromosome segregation. In Lactobacillus johnsonii (strain CNCM I-12250 / La1 / NCC 533), this protein is Probable cell division protein WhiA.